A 452-amino-acid polypeptide reads, in one-letter code: Transcription factor ETV6 (452 aa).

Positions 1–10 (MSETPAQCSI) are enriched in polar residues. A disordered region spans residues 1 to 30 (MSETPAQCSIKQERISYTPPESPVPSYASS). Position 11 is an N6-acetyllysine; alternate (lysine 11). Lysine 11 participates in a covalent cross-link: Glycyl lysine isopeptide (Lys-Gly) (interchain with G-Cter in SUMO2); alternate. Threonine 18 bears the Phosphothreonine mark. Serine 22 carries the post-translational modification Phosphoserine. One can recognise a PNT domain in the interval 40–124 (ALRMEEDSIR…ELLQHILKQR (85 aa)). Residues 158–262 (VQRTPRPSVD…PKPSSPRQES (105 aa)) are disordered. Phosphoserine is present on residues serine 213 and serine 238. The segment covering 230–250 (QESYPLSVSPMENNHCPASSE) has biased composition (polar residues). Serine 257 bears the Phosphoserine; by MAPK14 mark. Lysine 288 is covalently cross-linked (Glycyl lysine isopeptide (Lys-Gly) (interchain with G-Cter in SUMO2)). An N6-acetyllysine; alternate modification is found at lysine 302. Lysine 302 is covalently cross-linked (Glycyl lysine isopeptide (Lys-Gly) (interchain with G-Cter in SUMO2); alternate). Residue serine 323 is modified to Phosphoserine. Positions 339 to 420 (RLLWDYVYQL…PGQRLLFRFM (82 aa)) form a DNA-binding region, ETS. Glycyl lysine isopeptide (Lys-Gly) (interchain with G-Cter in SUMO2) cross-links involve residues lysine 403 and lysine 421.

This sequence belongs to the ETS family. In terms of assembly, can form homodimers or heterodimers with TEL2 or FLI1. Interacts with L3MBTL1 and HDAC9. Phosphorylation of Ser-257 by MAPK14 (p38) inhibits ETV6 transcriptional repression. Ubiquitous.

It localises to the nucleus. Its function is as follows. Transcriptional repressor; binds to the DNA sequence 5'-CCGGAAGT-3'. Plays a role in hematopoiesis and malignant transformation. In Homo sapiens (Human), this protein is Transcription factor ETV6 (ETV6).